A 454-amino-acid chain; its full sequence is MHTIAIGLNYKTAPVEIREKLVFSEHQLPEALKKLRSSKSMMECVILSTCNRTELYVVADQLHTGRYFAKAFLAEWFSVDMEDVTPYLVIRENDHAIEHLFRVACGLDSMVIGETQILGQVKQAFLLAQEEKVTGTVFNQLFKQAVTLGKRVHSSTEISSQAVSVSYAGVELGKKIFGTFSGKHVLILGAGKMSELTAKHLYANGAASISVMNRTKENAVELASQFAGTARSFAELNDALKEADVVISSTGARDFVVTKENAADALKKRKGRPLFAIDIAVPRDIDPEIATISDVYLYDIDDLQNIVETNKKERKKEAEKIGVMIEAEIDDFKAWLNTLGVVPLITALREKALQIQGDTMESIERKLPHLSERDIKVLNKHTKSIVNQLLRDPLTRVKELAAEPDAKHSLELFKTIFALEAQIELAEKAEADHAEQSWKEGQRPSLNQGMALRT.

Substrate-binding positions include 49–52 (TCNR), Ser-109, 114–116 (ETQ), and Gln-120. Residue Cys-50 is the Nucleophile of the active site. 189 to 194 (GAGKMS) contributes to the NADP(+) binding site. Positions 432-442 (DHAEQSWKEGQ) are enriched in basic and acidic residues. The disordered stretch occupies residues 432–454 (DHAEQSWKEGQRPSLNQGMALRT).

Belongs to the glutamyl-tRNA reductase family. Homodimer.

The catalysed reaction is (S)-4-amino-5-oxopentanoate + tRNA(Glu) + NADP(+) = L-glutamyl-tRNA(Glu) + NADPH + H(+). Its pathway is porphyrin-containing compound metabolism; protoporphyrin-IX biosynthesis; 5-aminolevulinate from L-glutamyl-tRNA(Glu): step 1/2. Functionally, catalyzes the NADPH-dependent reduction of glutamyl-tRNA(Glu) to glutamate 1-semialdehyde (GSA). This Shouchella clausii (strain KSM-K16) (Alkalihalobacillus clausii) protein is Glutamyl-tRNA reductase.